The following is a 518-amino-acid chain: Bifunctional enzyme NanE/NanK (518 aa).

A manNAc-6-P epimerase region spans residues 1–234; sequence MCRVQGMIEE…DAVESAAKPS (234 aa). A manNAc kinase region spans residues 235 to 518; the sequence is SPVLAFDIGG…VADLAATYFS (284 aa). Residues 239 to 246 and 365 to 372 contribute to the ATP site; these read AFDIGGTK and GIGGGIVL.

It in the N-terminal section; belongs to the NanE family. The protein in the C-terminal section; belongs to the ROK (NagC/XylR) family. NanK subfamily.

It carries out the reaction an N-acyl-D-glucosamine 6-phosphate = an N-acyl-D-mannosamine 6-phosphate. The catalysed reaction is an N-acyl-D-mannosamine + ATP = an N-acyl-D-mannosamine 6-phosphate + ADP + H(+). The protein operates within amino-sugar metabolism; N-acetylneuraminate degradation; D-fructose 6-phosphate from N-acetylneuraminate: step 2/5. It functions in the pathway amino-sugar metabolism; N-acetylneuraminate degradation; D-fructose 6-phosphate from N-acetylneuraminate: step 3/5. In terms of biological role, converts N-acetylmannosamine-6-phosphate (ManNAc-6-P) to N-acetylglucosamine-6-phosphate (GlcNAc-6-P). Functionally, catalyzes the phosphorylation of N-acetylmannosamine (ManNAc) to ManNAc-6-P. In Brucella melitensis biotype 1 (strain ATCC 23456 / CCUG 17765 / NCTC 10094 / 16M), this protein is Bifunctional enzyme NanE/NanK (nanEK).